The chain runs to 282 residues: Putative sugar uptake protein lp_2594 (282 aa).

10 helical membrane passes run 2–21 (IFLI…LLVG), 31–48 (MFGM…FWLF), 53–75 (VTIS…IGQL), 90–112 (MPIS…FGEW), 119–136 (ILGL…ALSA), 146–163 (FSCY…WIYS), 176–194 (LFLP…WAIY), 209–226 (TLPG…ILSA), 233–252 (NAYI…GLFF), and 262–281 (IVSV…TTAL).

Belongs to the GRP transporter (TC 2.A.7.5) family.

It localises to the cell membrane. In Lactiplantibacillus plantarum (strain ATCC BAA-793 / NCIMB 8826 / WCFS1) (Lactobacillus plantarum), this protein is Putative sugar uptake protein lp_2594.